A 397-amino-acid polypeptide reads, in one-letter code: Serpin B10 (397 aa).

A Nuclear localization signal motif is present at residues 74–77 (KKRK).

It belongs to the serpin family. Ov-serpin subfamily.

Its subcellular location is the nucleus. It localises to the cytoplasm. In terms of biological role, protease inhibitor that may play a role in the regulation of protease activities during hematopoiesis and apoptosis induced by TNF. May regulate protease activities in the cytoplasm and in the nucleus. The chain is Serpin B10 (Serpinb10) from Mus musculus (Mouse).